Consider the following 109-residue polypeptide: Small ribosomal subunit protein bS6 (109 aa).

This sequence belongs to the bacterial ribosomal protein bS6 family.

Binds together with bS18 to 16S ribosomal RNA. The protein is Small ribosomal subunit protein bS6 of Ehrlichia chaffeensis (strain ATCC CRL-10679 / Arkansas).